Reading from the N-terminus, the 293-residue chain is Light-independent protochlorophyllide reductase iron-sulfur ATP-binding protein (293 aa).

Residues 10–15 and Lys39 contribute to the ATP site; that span reads GIGKST. Residue Ser14 coordinates Mg(2+). Residues Cys95 and Cys129 each coordinate [4Fe-4S] cluster. Residue 180-181 coordinates ATP; it reads NR.

It belongs to the NifH/BchL/ChlL family. Homodimer. Protochlorophyllide reductase is composed of three subunits; ChlL, ChlN and ChlB. Requires [4Fe-4S] cluster as cofactor.

It is found in the plastid. The protein resides in the chloroplast. The catalysed reaction is chlorophyllide a + oxidized 2[4Fe-4S]-[ferredoxin] + 2 ADP + 2 phosphate = protochlorophyllide a + reduced 2[4Fe-4S]-[ferredoxin] + 2 ATP + 2 H2O. It participates in porphyrin-containing compound metabolism; chlorophyll biosynthesis (light-independent). In terms of biological role, component of the dark-operative protochlorophyllide reductase (DPOR) that uses Mg-ATP and reduced ferredoxin to reduce ring D of protochlorophyllide (Pchlide) to form chlorophyllide a (Chlide). This reaction is light-independent. The L component serves as a unique electron donor to the NB-component of the complex, and binds Mg-ATP. This Adiantum capillus-veneris (Maidenhair fern) protein is Light-independent protochlorophyllide reductase iron-sulfur ATP-binding protein.